A 566-amino-acid polypeptide reads, in one-letter code: Transcription factor atf1 (566 aa).

A compositionally biased stretch (polar residues) spans Met1 to Pro42. Disordered stretches follow at residues Met1–Ser83, Ser96–Ser117, Gln315–Ser345, and Ser357–Leu479. Over residues Ser43–Ser53 the composition is skewed to low complexity. 2 stretches are compositionally biased toward polar residues: residues Ala65–Val76 and Phe97–Gly106. A compositionally biased stretch (low complexity) spans Asn107 to Ser117. Composition is skewed to polar residues over residues Thr379–Ser412 and Thr421–Gly460. A compositionally biased stretch (basic and acidic residues) spans Ser466 to Leu479. The 64-residue stretch at Glu472–His535 folds into the bZIP domain. Residues Lys474–Lys503 are basic motif. Residues Leu514–Leu528 form a leucine-zipper region.

Belongs to the bZIP family. Heterodimer of pcr1/mts2 and atf1/mts1. In terms of processing, phosphorylated by sty1/spc1.

The protein resides in the nucleus. Functionally, transcription factor required for sexual development and entry into stationary phase. Binds and activates CRE sites (cAMP-response elements, also known as M26 meiotic recombination hotspots). The polypeptide is Transcription factor atf1 (atf1) (Schizosaccharomyces pombe (strain 972 / ATCC 24843) (Fission yeast)).